Reading from the N-terminus, the 344-residue chain is Anthranilate phosphoribosyltransferase (344 aa).

Residues Gly84, 87–88, Ser92, 94–97, 112–120, and Ser124 each bind 5-phospho-alpha-D-ribose 1-diphosphate; these read GD, NIST, and KHGNRSASG. Gly84 serves as a coordination point for anthranilate. Residue Ser96 participates in Mg(2+) binding. Asn115 lines the anthranilate pocket. Arg170 is a binding site for anthranilate. Mg(2+) contacts are provided by Asp229 and Glu230.

The protein belongs to the anthranilate phosphoribosyltransferase family. Homodimer. Requires Mg(2+) as cofactor.

The catalysed reaction is N-(5-phospho-beta-D-ribosyl)anthranilate + diphosphate = 5-phospho-alpha-D-ribose 1-diphosphate + anthranilate. Its pathway is amino-acid biosynthesis; L-tryptophan biosynthesis; L-tryptophan from chorismate: step 2/5. Its function is as follows. Catalyzes the transfer of the phosphoribosyl group of 5-phosphorylribose-1-pyrophosphate (PRPP) to anthranilate to yield N-(5'-phosphoribosyl)-anthranilate (PRA). This is Anthranilate phosphoribosyltransferase from Synechococcus sp. (strain RCC307).